The sequence spans 427 residues: Mitochondrial distribution and morphology protein 12 (427 aa).

An SMP-LTD domain is found at 1–387 (MSFDINWNQL…WPSWICIDMN (387 aa)). The segment covering 81–96 (NDSKDEHLKNHGDGIN) has biased composition (basic and acidic residues). Disordered stretches follow at residues 81-168 (NDSK…APPL) and 387-427 (NDDD…EAGE). The segment covering 106–133 (LDDEDEDDEDDDEDDEDEEEEDEDDYDD) has biased composition (acidic residues). A compositionally biased stretch (polar residues) spans 146–161 (LNFNENSTTPSANSFA). The segment covering 387 to 402 (NDDDDEEEEEESEDND) has biased composition (acidic residues). The span at 411–427 (NDGKHGDGRTDETEAGE) shows a compositional bias: basic and acidic residues.

The protein belongs to the MDM12 family. Component of the ER-mitochondria encounter structure (ERMES) or MDM complex, composed of MMM1, MDM10, MDM12 and MDM34. An MMM1 homodimer associates with one molecule of MDM12 on each side in a pairwise head-to-tail manner, and the SMP-LTD domains of MMM1 and MDM12 generate a continuous hydrophobic tunnel for phospholipid trafficking.

It is found in the mitochondrion outer membrane. The protein resides in the endoplasmic reticulum membrane. Component of the ERMES/MDM complex, which serves as a molecular tether to connect the endoplasmic reticulum (ER) and mitochondria. Components of this complex are involved in the control of mitochondrial shape and protein biogenesis, and function in nonvesicular lipid trafficking between the ER and mitochondria. MDM12 is required for the interaction of the ER-resident membrane protein MMM1 and the outer mitochondrial membrane-resident beta-barrel protein MDM10. The MDM12-MMM1 subcomplex functions in the major beta-barrel assembly pathway that is responsible for biogenesis of all mitochondrial outer membrane beta-barrel proteins, and acts in a late step after the SAM complex. The MDM10-MDM12-MMM1 subcomplex further acts in the TOM40-specific pathway after the action of the MDM12-MMM1 complex. Essential for establishing and maintaining the structure of mitochondria and maintenance of mtDNA nucleoids. In Candida albicans (strain WO-1) (Yeast), this protein is Mitochondrial distribution and morphology protein 12.